A 453-amino-acid polypeptide reads, in one-letter code: MARETFPFTSSMLRSLRLQQEWLEWEDRRRAAAQQCRSRRCPSSPRARLTRPHRSCRDPAVHQALFSGNLQQVQALFQDEEAANMIVETVSNQLAWSAEQGFWVLTPKTKQTAPLAIATARGYTDCARHLIRQGAELDARVGGRAALHEACARAQFDCVRLLLTFGAKANVLTEEGTTPLHLCTIPESLQCAKLLLEAGATVNLAAGESQETPLHVAAARGLEQHVALYLEHGADVGLRTSQGETALNTACAGAEGPGSCRRHQAAARRLLEAGADARAAGRKRHTPLHNACANGCGGLAELLLRYGARAEVPNGAGHTPMDCALQAVQDSPNWEPEVLFAALLDYGAQPVRPEMLKHCANFPRALEVLLNAYPCVPSCETWVEAVLPELWKEHEAFYSSALCMVNQPRQLQHLARLAVRARLGSRCRQGATRLPLPPLLRDYLLLRVEGCIQ.

ANK repeat units lie at residues 56–85 (CRDP…AANM), 110–139 (KQTA…ELDA), 142–171 (GGRA…KANV), 175–204 (EGTT…TVNL), 209–238 (SQET…DVGL), 242–279 (QGET…DARA), and 283–312 (KRHT…RAEV). An SOCS box domain is found at 398 to 450 (YSSALCMVNQPRQLQHLARLAVRARLGSRCRQGATRLPLPPLLRDYLLLRVEG).

The protein belongs to the ankyrin SOCS box (ASB) family.

It participates in protein modification; protein ubiquitination. Functionally, may be a substrate-recognition component of a SCF-like ECS (Elongin-Cullin-SOCS-box protein) E3 ubiquitin-protein ligase complex which mediates the ubiquitination and subsequent proteasomal degradation of target proteins. This chain is Ankyrin repeat and SOCS box protein 16 (ASB16), found in Homo sapiens (Human).